Here is a 204-residue protein sequence, read N- to C-terminus: Somatotropin (204 aa).

An N-terminal signal peptide occupies residues 1 to 17; the sequence is MNSVVLQLSVVCLGVSS. Pyrrolidone carboxylic acid is present on Gln18. Residue His36 coordinates Zn(2+). Cys69 and Cys177 are oxidised to a cystine. Residue Glu186 coordinates Zn(2+). Cysteines 194 and 202 form a disulfide.

Belongs to the somatotropin/prolactin family.

It is found in the secreted. Its function is as follows. Growth hormone plays an important role in growth control and involved in the regulation of several anabolic processes. The sequence is that of Somatotropin (gh) from Oreochromis mossambicus (Mozambique tilapia).